A 273-amino-acid chain; its full sequence is Ribosomal RNA small subunit methyltransferase A (273 aa).

The S-adenosyl-L-methionine site is built by Asn25, Leu27, Gly52, Glu73, Asp99, and Asn118.

Belongs to the class I-like SAM-binding methyltransferase superfamily. rRNA adenine N(6)-methyltransferase family. RsmA subfamily.

Its subcellular location is the cytoplasm. It carries out the reaction adenosine(1518)/adenosine(1519) in 16S rRNA + 4 S-adenosyl-L-methionine = N(6)-dimethyladenosine(1518)/N(6)-dimethyladenosine(1519) in 16S rRNA + 4 S-adenosyl-L-homocysteine + 4 H(+). Its function is as follows. Specifically dimethylates two adjacent adenosines (A1518 and A1519) in the loop of a conserved hairpin near the 3'-end of 16S rRNA in the 30S particle. May play a critical role in biogenesis of 30S subunits. This is Ribosomal RNA small subunit methyltransferase A from Novosphingobium aromaticivorans (strain ATCC 700278 / DSM 12444 / CCUG 56034 / CIP 105152 / NBRC 16084 / F199).